Consider the following 671-residue polypeptide: Bifunctional acetylxylan esterase/xylanase XynS20E (671 aa).

The first 19 residues, 1–19 (MRLGVALSTIAVLLTATSA), serve as a signal peptide directing secretion. Residues 54–279 (QGAGRDIHVY…IQDIWDFVSQ (226 aa)) form an acetylxylan esterase region. Serine 152 functions as the Charge relay system in the catalytic mechanism. Asparagine 238 carries an N-linked (GlcNAc...) asparagine glycan. A disordered region spans residues 285–328 (PVSASGNGGGNTTPTNPSTGGNGNGNGGGNTTPTNPSTGGNGNG). A compositionally biased stretch (gly residues) spans 304–314 (GGNGNGNGGGN). 2 CBM10 domains span residues 335-374 (KCSS…CGCG) and 383-422 (TCSA…CGCG). Asparagine 339 is a glycosylation site (N-linked (GlcNAc...) asparagine). 2 N-linked (GlcNAc...) asparagine glycosylation sites follow: asparagine 445 and asparagine 483. Residues 461 to 661 (TVTSNKVGDI…NNGGTSGTAD (201 aa)) form the GH11 domain. The active-site Nucleophile is glutamate 555. The active-site Proton donor is glutamate 648.

It in the N-terminal section; belongs to the axeA family. In the C-terminal section; belongs to the glycosyl hydrolase 11 (cellulase G) family.

It localises to the secreted. It catalyses the reaction Deacetylation of xylans and xylo-oligosaccharides.. The enzyme catalyses Endohydrolysis of (1-&gt;4)-beta-D-xylosidic linkages in xylans.. It functions in the pathway glycan degradation; xylan degradation. Functionally, bifunctional acetylxylan esterase/xylanase involved in the hydrolysis of xylan, a major structural heterogeneous polysaccharide found in plant biomass representing the second most abundant polysaccharide in the biosphere, after cellulose. Degrades xylan from acetylxylan, beechwood, birchwood, and oat spelt, and releases acetate from 4-methylumbelliferyl acetate and beta-D-xylose tetraacetate. No activity is observed against carboxy methyl cellulose, beta-glucan, p-nitrophenol acetate, p-nitrophenol laurate, p-nitrophenol myristate, p-nitrophenol, palmitate, or beta-naphthol acetate. The protein is Bifunctional acetylxylan esterase/xylanase XynS20E (xynS20E) of Neocallimastix patriciarum (Rumen fungus).